The following is a 178-amino-acid chain: ATP synthase subunit delta (178 aa).

Belongs to the ATPase delta chain family. In terms of assembly, F-type ATPases have 2 components, F(1) - the catalytic core - and F(0) - the membrane proton channel. F(1) has five subunits: alpha(3), beta(3), gamma(1), delta(1), epsilon(1). F(0) has three main subunits: a(1), b(2) and c(10-14). The alpha and beta chains form an alternating ring which encloses part of the gamma chain. F(1) is attached to F(0) by a central stalk formed by the gamma and epsilon chains, while a peripheral stalk is formed by the delta and b chains.

The protein localises to the cell inner membrane. In terms of biological role, f(1)F(0) ATP synthase produces ATP from ADP in the presence of a proton or sodium gradient. F-type ATPases consist of two structural domains, F(1) containing the extramembraneous catalytic core and F(0) containing the membrane proton channel, linked together by a central stalk and a peripheral stalk. During catalysis, ATP synthesis in the catalytic domain of F(1) is coupled via a rotary mechanism of the central stalk subunits to proton translocation. Its function is as follows. This protein is part of the stalk that links CF(0) to CF(1). It either transmits conformational changes from CF(0) to CF(1) or is implicated in proton conduction. This chain is ATP synthase subunit delta, found in Marinobacter nauticus (strain ATCC 700491 / DSM 11845 / VT8) (Marinobacter aquaeolei).